The chain runs to 117 residues: Ribonuclease P protein component (117 aa).

This sequence belongs to the RnpA family. In terms of assembly, consists of a catalytic RNA component (M1 or rnpB) and a protein subunit.

It catalyses the reaction Endonucleolytic cleavage of RNA, removing 5'-extranucleotides from tRNA precursor.. Functionally, RNaseP catalyzes the removal of the 5'-leader sequence from pre-tRNA to produce the mature 5'-terminus. It can also cleave other RNA substrates such as 4.5S RNA. The protein component plays an auxiliary but essential role in vivo by binding to the 5'-leader sequence and broadening the substrate specificity of the ribozyme. The sequence is that of Ribonuclease P protein component from Lactococcus lactis subsp. cremoris (strain MG1363).